Consider the following 639-residue polypeptide: Homeobox protein 9 (639 aa).

6 disordered regions span residues 1–45 (MLNS…DKQN), 66–144 (SPNH…DDNS), 157–179 (NQNQNQNQNQNQNQNQNQNQNQN), 262–313 (PRTL…SSGT), 331–422 (SESS…QTSN), and 436–547 (TNKN…NNEN). Residues 72 to 109 (ANNNNNNNNNNNNNNNNNNNNNNNNNNNNNNNNNNNIQ) adopt a coiled-coil conformation. Composition is skewed to low complexity over residues 73-119 (NNNN…SNNN) and 126-142 (GSLNSSNDNNFNSGNDD). Coiled coils occupy residues 152–184 (SNQNQNQNQNQNQNQNQNQNQNQNQNQNQKDSW) and 230–296 (EIEI…NINE). Positions 266–300 (NNSSDSISENINNNNNNNNNNNNNNNNNINESNIN) are enriched in low complexity. The span at 345–354 (QPRKVPRDLN) shows a compositional bias: basic and acidic residues. Low complexity predominate over residues 358 to 399 (NNNINYANNNNNNNNNNNNNNHNNNINNNNNNNNNNNNNSNN). The stretch at 365–396 (NNNNNNNNNNNNNNHNNNINNNNNNNNNNNNN) forms a coiled coil. Over residues 405–422 (GSITNSVNIKPSKDQTSN) the composition is skewed to polar residues. The span at 436–526 (TNKNNNNNNN…NNNLTSSSNN (91 aa)) shows a compositional bias: low complexity. The segment covering 532 to 547 (GNTSPNQSSANGNNEN) has biased composition (polar residues). Positions 559–621 (KRKKRGKLPG…NARRRILPRQ (63 aa)) form a DNA-binding region, homeobox.

The protein resides in the nucleus. Its function is as follows. Putative transcription factor. The protein is Homeobox protein 9 (hbx9) of Dictyostelium discoideum (Social amoeba).